Here is a 242-residue protein sequence, read N- to C-terminus: tRNA pseudouridine synthase A (242 aa).

Catalysis depends on aspartate 51, which acts as the Nucleophile. Tyrosine 107 serves as a coordination point for substrate.

Belongs to the tRNA pseudouridine synthase TruA family. As to quaternary structure, homodimer.

It carries out the reaction uridine(38/39/40) in tRNA = pseudouridine(38/39/40) in tRNA. Functionally, formation of pseudouridine at positions 38, 39 and 40 in the anticodon stem and loop of transfer RNAs. The protein is tRNA pseudouridine synthase A of Helicobacter pylori (strain P12).